An 80-amino-acid polypeptide reads, in one-letter code: Pigment-dispersing hormone peptides (80 aa).

Positions 1–20 (MANYITIAIIVGIVCGQALS) are cleaved as a signal peptide. Positions 21 to 58 (VEDVDRNLLELNLPYGRGLDSELQLARLMLAAPRFCHP) are excised as a propeptide. Alanine amide is present on Ala-78.

Belongs to the arthropod PDH family. Expressed in the brain (at protein level).

Its subcellular location is the secreted. Its function is as follows. Neuropeptide PDF is the main transmitter regulating circadian locomotor rhythms. The chain is Pigment-dispersing hormone peptides from Camponotus floridanus (Florida carpenter ant).